Consider the following 418-residue polypeptide: Gamma-glutamyl phosphate reductase (418 aa).

Belongs to the gamma-glutamyl phosphate reductase family.

Its subcellular location is the cytoplasm. The enzyme catalyses L-glutamate 5-semialdehyde + phosphate + NADP(+) = L-glutamyl 5-phosphate + NADPH + H(+). Its pathway is amino-acid biosynthesis; L-proline biosynthesis; L-glutamate 5-semialdehyde from L-glutamate: step 2/2. Catalyzes the NADPH-dependent reduction of L-glutamate 5-phosphate into L-glutamate 5-semialdehyde and phosphate. The product spontaneously undergoes cyclization to form 1-pyrroline-5-carboxylate. The polypeptide is Gamma-glutamyl phosphate reductase (Geotalea uraniireducens (strain Rf4) (Geobacter uraniireducens)).